A 951-amino-acid chain; its full sequence is MANDKIVIHGARAHNLKDIDVTIPRDKLVVITGLSGSGKSSLAFDTLYAEGQRRYVESLSAYARQFLGQMQKPDVDSIDGLSPAISIDQKTTSKNPRSTVGTVTEINDYLRLLWARVGEPICPNDGTPIASQTVEQMVDRIQKLPERTKLQILSPIVRQKKGEHKKIFEKIKREGFVRVRVDGDIHDISETFELNKNQQHTIEIVIDRIVVKSGDRSRLFDSFEAALRLSGGYAIADVIGGEPIMFSEHYACPICGFTVGELEPRLFSFNAPQGACPDCEGLGIKLEVDEDLVVPDKSLTLAEGALAPWNPISSQYYPEMLKQACEQLEIPMDVPYEDLSKADQQTVLYGSNGKTFHFHYQNDFGGVRDVDAVFEGVINNVDRRYHETNSDFTRDVMRKYMTELTCQTCHGFRLNRKALSVKVGGEHIGMVSDLAIGKELDFFNELSLSEQSLVIAKPILKEIRDRLSFLQNVGLAYLTLSRSARTLSGGEAQRIRLATQIGSNLSGVLYILDEPSIGLHQRDNDRLIGSLKKMRDLGNTLIVVEHDEDTMRAADYIVDIGPGAGENGGEVMAAGTPKQVARSRKSLTGQYLSGKRFIPLPETRRPGNGKKIRITGAAENNLKQIDVDFPLGEFVVVTGVSGSGKSTLVNDVLKRVLAQKLNRNSEKPGKYKSVSGIKNIERLVNIDQSPIGRTPRSNPATYTGVFDNIRDLFAQTNEAKLRGYKKGRFSFNTKGGRCEACHGDGILKIEMNFLPDVFVPCEVCHGKQYNSETLEVEYKGKNIADVLQMTASEAVKFFEPIPKIRRKLQTLVDVGLGYVKLGQPATTLSGGEAQRMKLASELHKQQSGKNFYILDEPTTGLHSEDIRRLIGVLDRLVDAGNTVLIIEHNLDVVKSADYLIDLGPEGGDGGGTIVATGTPEQVAEVAESYTGQYLKPVLERDRAREATAPAK.

Residue 33 to 40 (GLSGSGKS) coordinates ATP. Residues 252-279 (CPICGFTVGELEPRLFSFNAPQGACPDC) form a C4-type zinc finger. ABC transporter domains follow at residues 309–587 (WNPI…RKSL) and 607–935 (GNGK…QYLK). 639-646 (GVSGSGKS) contributes to the ATP binding site. The segment at 738–764 (CEACHGDGILKIEMNFLPDVFVPCEVC) adopts a C4-type zinc-finger fold.

The protein belongs to the ABC transporter superfamily. UvrA family. As to quaternary structure, forms a heterotetramer with UvrB during the search for lesions.

The protein resides in the cytoplasm. Functionally, the UvrABC repair system catalyzes the recognition and processing of DNA lesions. UvrA is an ATPase and a DNA-binding protein. A damage recognition complex composed of 2 UvrA and 2 UvrB subunits scans DNA for abnormalities. When the presence of a lesion has been verified by UvrB, the UvrA molecules dissociate. This is UvrABC system protein A from Lactiplantibacillus plantarum (strain ATCC BAA-793 / NCIMB 8826 / WCFS1) (Lactobacillus plantarum).